Consider the following 1628-residue polypeptide: Centrosomal protein of 170 kDa protein B (1628 aa).

Positions 23–73 constitute an FHA domain; sequence IFVGREDCELMLQSRSVDKQHAVINYDSDKDEHRVKDLGSLNGTFVNDVRI. 12 disordered regions span residues 136 to 201, 329 to 369, 415 to 504, 566 to 586, 637 to 659, 719 to 739, 758 to 842, 1005 to 1084, 1100 to 1341, 1379 to 1405, 1443 to 1463, and 1560 to 1628; these read EHGA…DMTQ, LIRR…SEDP, PRKK…GKNY, SDVRTGKVKNEEEDNLSDAGT, LASEPSVPHKPIMSSTPPVKLSN, EHQGEADPTVPSRTRRLLPQL, ESQR…KKST, VSLV…LDFT, TVSS…EDEQ, AGDGDSQSSSGTGQSTSISSVPNTPAS, GSTGLEDFDQNMNDSREDPSK, and HLDV…TYIV. Composition is skewed to basic and acidic residues over residues 147-156 and 180-201; these read KQDKADKKAT and KLDKEGRRQDEHYSERPNDMTQ. A compositionally biased stretch (polar residues) spans 421–434; that stretch reads QSFTHNANSPQNDT. Basic and acidic residues predominate over residues 436 to 453; that stretch reads PVLKAKAEKRKGTLHVEK. Residues 454 to 479 show a composition bias toward polar residues; that stretch reads VSTNGMGSTAPASKSLSSPSFPQRSN. Residues 481–490 are compositionally biased toward basic and acidic residues; the sequence is FRREKTEDRI. Composition is skewed to basic and acidic residues over residues 758-773 and 817-828; these read ESQRKSLEEPEKRISE and WKGEESHSREPS. Residues 1005-1023 are compositionally biased toward polar residues; that stretch reads VSLVSDKNVPSHSQKNRIV. Residues 1045-1056 show a composition bias toward basic and acidic residues; sequence ARERLSEKRRTV. Residues 1129-1150 show a composition bias toward polar residues; the sequence is RSSNAQKVQQALTRSNSLSTPR. Residues 1176 to 1193 are compositionally biased toward low complexity; it reads SNISPGTSSANSSSAKSS. The span at 1216–1227 shows a compositional bias: polar residues; sequence NVPSDSETTSSV. 3 stretches are compositionally biased toward low complexity: residues 1261 to 1280, 1312 to 1328, and 1381 to 1398; these read TQKQTPRPRSSSVKYSSSST, ASTATQTSRSSSVSRRQ, and DGDSQSSSGTGQSTSISS. A compositionally biased stretch (polar residues) spans 1564–1596; it reads PSSNKKTSSTILTSNPLSRTTNNSAARTESQTP. Positions 1606–1618 are enriched in low complexity; sequence SSSSSSRSPGSSF.

This sequence belongs to the CEP170 family.

The protein localises to the cytoplasm. The protein resides in the cytoskeleton. Plays a role in microtubule organization. The polypeptide is Centrosomal protein of 170 kDa protein B (cep170b) (Xenopus tropicalis (Western clawed frog)).